The following is a 183-amino-acid chain: Isopentenyl-diphosphate Delta-isomerase (183 aa).

2 residues coordinate Mn(2+): His26 and His33. The Nudix hydrolase domain occupies Ser31 to Ser165. Cys68 is a catalytic residue. Mn(2+) is bound at residue His70. Glu88 provides a ligand contact to Mg(2+). Positions 115 and 117 each coordinate Mn(2+). Glu117 is an active-site residue.

It belongs to the IPP isomerase type 1 family. Homodimer. The cofactor is Mg(2+). It depends on Mn(2+) as a cofactor.

It is found in the cytoplasm. The enzyme catalyses isopentenyl diphosphate = dimethylallyl diphosphate. It functions in the pathway isoprenoid biosynthesis; dimethylallyl diphosphate biosynthesis; dimethylallyl diphosphate from isopentenyl diphosphate: step 1/1. Its function is as follows. Catalyzes the 1,3-allylic rearrangement of the homoallylic substrate isopentenyl (IPP) to its highly electrophilic allylic isomer, dimethylallyl diphosphate (DMAPP). This chain is Isopentenyl-diphosphate Delta-isomerase, found in Enterobacter sp. (strain 638).